Reading from the N-terminus, the 271-residue chain is Ribonuclease 3 (271 aa).

One can recognise an RNase III domain in the interval 5 to 139 (PALLELKLDY…IMAAIYLDGG (135 aa)). Glu-52 is a binding site for Mg(2+). The active site involves Asp-56. The Mg(2+) site is built by Asp-125 and Glu-128. Glu-128 is a catalytic residue. Residues 172–241 (NFKSALQELA…ARGLYERLMG (70 aa)) enclose the DRBM domain. The tract at residues 241–271 (GDPIVPLPDDSPGDSPDDSGDAAESGVISAT) is disordered. Residues 251–261 (SPGDSPDDSGD) show a composition bias toward acidic residues.

It belongs to the ribonuclease III family. As to quaternary structure, homodimer. Mg(2+) is required as a cofactor.

The protein resides in the cytoplasm. It carries out the reaction Endonucleolytic cleavage to 5'-phosphomonoester.. Digests double-stranded RNA. Involved in the processing of primary rRNA transcript to yield the immediate precursors to the large and small rRNAs (23S and 16S). Processes some mRNAs, and tRNAs when they are encoded in the rRNA operon. Processes pre-crRNA and tracrRNA of type II CRISPR loci if present in the organism. In Solibacter usitatus (strain Ellin6076), this protein is Ribonuclease 3.